A 614-amino-acid polypeptide reads, in one-letter code: Glucosidase 2 subunit beta (614 aa).

The N-terminal stretch at 1 to 19 is a signal peptide; that stretch reads MGLHAILLLLLLRISASAA. N-linked (GlcNAc...) asparagine glycosylation is present at Asn115. Composition is skewed to basic and acidic residues over residues 194 to 222, 231 to 272, and 324 to 351; these read EEER…KKAS, QENH…HDPE, and TGEK…HSEE. A disordered region spans residues 194-396; it reads EEERLRKEKE…SHESDDEYVD (203 aa). Positions 352–364 are enriched in acidic residues; that stretch reads THEDESDVPESAE. Basic and acidic residues predominate over residues 372-382; sequence SEVEDDRHKYD. Acidic residues predominate over residues 383-396; the sequence is DEDFSHESDDEYVD. One can recognise an MRH domain in the interval 497 to 592; that stretch reads DQCFESKEGK…VLSTPALCDE (96 aa). Intrachain disulfides connect Cys499/Cys512, Cys549/Cys578, and Cys563/Cys590.

In terms of assembly, heterodimer of a catalytic alpha subunit and a beta subunit.

It is found in the endoplasmic reticulum. It participates in glycan metabolism; N-glycan metabolism. Regulatory subunit of glucosidase II. May be required for defense response elicited by pathogen-associated molecular patterns (PAMPs). This chain is Glucosidase 2 subunit beta, found in Oryza sativa subsp. japonica (Rice).